Reading from the N-terminus, the 583-residue chain is MRTHFCGLVDETLIGQTVTLAGWTDVARNQGGVCFIDLRDHEGIVQVTVEVDNAEVFAVAASLGYEDVLQVEGVVRARHAVNDKMRTGKVEVIATAITVLNKAAPLPFHAHENPGEETRLKYRYLDLRRPEMQRMQRTRIKLVQALRRHLDEKGFQDIETPILTKATPEGARDFLVPARMHPGEFYALPQSPQLFKQILMVAGFDRYYQIARCFRDEALRADRQLEFTQLDMEFAFVRERDVQDFVEDMIRGIFKEVVNVELDASFPRMTWAEAMRRYGSDKPDLRIALELVDVAELVKNSEFPVFTGPANDADGRVAALRIPGGASLSRKQIDEYAAHAAKYGAKGLAYIKIADNGEVSSPIQKFFSEESFAALVAHVGAGNGDIVFFGAGGYNKVSDFMGALRLKAGKDFGLVADGWAPLWVTDFPMFEWDEEEQRYVALHHPFTAPAVDDIADLRANARTAVSRGYDMVLNGNEIGGGSIRIHRPDMQSAVFELLGIGAEEARAKFGFLLDALNYGAPPHGGIAFGIDRIAALMAGTESIRDVIPFPKTTGAQDLMTDAPSPIVDAQLAEVHIQVRPKTN.

Residue Glu-169 coordinates L-aspartate. The aspartate stretch occupies residues 193–196 (QLFK). Arg-215 serves as a coordination point for L-aspartate. ATP contacts are provided by residues 215–217 (RDE) and Gln-224. Position 443 (His-443) interacts with L-aspartate. Glu-477 is an ATP binding site. An L-aspartate-binding site is contributed by Arg-484. 529-532 (GIDR) contacts ATP.

It belongs to the class-II aminoacyl-tRNA synthetase family. Type 1 subfamily. In terms of assembly, homodimer.

It localises to the cytoplasm. The catalysed reaction is tRNA(Asp) + L-aspartate + ATP = L-aspartyl-tRNA(Asp) + AMP + diphosphate. Catalyzes the attachment of L-aspartate to tRNA(Asp) in a two-step reaction: L-aspartate is first activated by ATP to form Asp-AMP and then transferred to the acceptor end of tRNA(Asp). In Stenotrophomonas maltophilia (strain R551-3), this protein is Aspartate--tRNA ligase.